A 460-amino-acid chain; its full sequence is SPbeta prophage-derived uncharacterized protein YopQ (460 aa).

This Bacillus subtilis (strain 168) protein is SPbeta prophage-derived uncharacterized protein YopQ (yopQ).